Reading from the N-terminus, the 322-residue chain is Sideroflexin fsf1 (322 aa).

The next 4 helical transmembrane spans lie at 143 to 163, 175 to 195, 229 to 249, and 269 to 289; these read SYIY…KIVP, VLGR…NVFL, TALS…LVLM, and LGLI…VFPA.

Belongs to the sideroflexin family.

It is found in the mitochondrion membrane. In terms of biological role, mitochondrial amino-acid transporter that mediates transport of serine into mitochondria. The protein is Sideroflexin fsf1 of Schizosaccharomyces pombe (strain 972 / ATCC 24843) (Fission yeast).